The primary structure comprises 243 residues: uncharacterized protein (243 aa).

[4Fe-4S] cluster-binding residues include C120 and C157.

As to quaternary structure, homodimer. [4Fe-4S] cluster is required as a cofactor.

This is an uncharacterized protein from Methanocaldococcus jannaschii (strain ATCC 43067 / DSM 2661 / JAL-1 / JCM 10045 / NBRC 100440) (Methanococcus jannaschii).